Reading from the N-terminus, the 1823-residue chain is AF4/FMR2 family member lilli (1823 aa).

Residues 1–41 (MAQQQQQQHQQQQHHQQQQQQLQQQQQLLQYNNNSYNLNYN) are compositionally biased toward low complexity. Disordered regions lie at residues 1 to 87 (MAQQ…DPEI), 126 to 305 (GFGS…ENHI), 422 to 544 (QQLT…KKKY), 570 to 626 (AGPG…WHLS), 686 to 712 (DSRH…YGVG), 753 to 1057 (PKNQ…DIPT), 1071 to 1287 (AAAQ…LKPR), 1322 to 1350 (ARQH…GART), 1413 to 1448 (FMLK…AEQL), 1480 to 1531 (ENSA…AIAS), 1547 to 1567 (TCSE…APRL), and 1715 to 1744 (GNTP…IVPQ). A compositionally biased stretch (basic and acidic residues) spans 53–79 (REKYERQQGIQSDDRETSLFGEPRRLN). 3 stretches are compositionally biased toward low complexity: residues 126 to 147 (GFGS…SSAS), 156 to 174 (QQQQ…QQQQ), and 205 to 249 (PSSS…TSSP). Residues 426-438 (PTPPKASPTPPVI) show a composition bias toward pro residues. Thr-434 carries the post-translational modification Phosphothreonine. Residues 441 to 454 (LKTEKNHSLEKQDS) are compositionally biased toward basic and acidic residues. A compositionally biased stretch (acidic residues) spans 456–466 (LENDLELSESD). A phosphoserine mark is found at Ser-463 and Ser-465. A compositionally biased stretch (low complexity) spans 475–531 (SAGNSSNSSESDSSESGSEASSKGDPQQQQQQQQQHLLHQQQQHQQQQLLLQQQQQQ). Gly residues predominate over residues 582–598 (AAGGVGSGSGSTGGGSS). Over residues 599-612 (SSGMGTMSSSNSSN) the composition is skewed to low complexity. Residues 764-785 (SDSGSGSSGSGSSSSDSAGGSS) are compositionally biased toward low complexity. Positions 818–827 (HKAQPNSVTL) are enriched in polar residues. The segment covering 839–849 (PRQKKPRKKKM) has biased composition (basic residues). Phosphoserine is present on residues Ser-859 and Ser-860. Low complexity-rich tracts occupy residues 877 to 906 (AATA…AAPA), 917 to 947 (QAQQ…SSQA), 962 to 979 (GTAS…VAAG), 1002 to 1057 (AAMA…DIPT), and 1102 to 1161 (NSSN…QLLQ). The a.T hook DNA-binding region spans 908-920 (KKGRGRPRKQAQQ). A phosphoserine mark is found at Ser-939 and Ser-941. The span at 1172 to 1181 (TLKQSAQQRL) shows a compositional bias: polar residues. Low complexity-rich tracts occupy residues 1182-1203 (SSSD…ASSS) and 1253-1280 (QQQQ…QQQQ). A compositionally biased stretch (polar residues) spans 1334–1344 (TQQNGHLSSRS). Residues 1480-1496 (ENSANASPNKLQQQNAR) are compositionally biased toward polar residues. Residue Ser-1486 is modified to Phosphoserine. Low complexity predominate over residues 1497 to 1531 (QLPLSQSQLQHQHQHQHQLQQQQSQSTATGHAIAS). Over residues 1555–1565 (TPPPAAPPPAP) the composition is skewed to pro residues. The segment covering 1715–1735 (GNTPSSISPSNSVGSQGSGSN) has biased composition (low complexity).

The protein belongs to the AF4 family.

The protein localises to the nucleus. Functionally, has a role in transcriptional regulation. Acts in parallel with the Ras/MAPK and the PI3K/PKB pathways in the control of cell identity and cellular growth. Essential for regulation of the cytoskeleton and cell growth but not for cell proliferation or growth rate. Required specifically for the microtubule-based basal transport of lipid droplets. Plays a partially redundant function downstream of Raf in cell fate specification in the developing eye. Pair-rule protein that regulates embryonic cellularization, gastrulation and segmentation. This is AF4/FMR2 family member lilli from Drosophila virilis (Fruit fly).